We begin with the raw amino-acid sequence, 414 residues long: WW domain-containing oxidoreductase (414 aa).

The segment at 1–24 (MAALRYAGLDDTDSEDELPPGWEE) is disordered. Threonine 12 is subject to Phosphothreonine. A Phosphoserine modification is found at serine 14. The 34-residue stretch at 16 to 49 (DELPPGWEERTTKDGWVYYANHTEEKTQWEHPKT) folds into the WW 1 domain. Tyrosine 33 bears the Phosphotyrosine mark. The short motif at 50–55 (GKRKRV) is the Nuclear localization signal element. In terms of domain architecture, WW 2 spans 57–90 (GDLPYGWEQGTDENGQVFFVDHINKRTTYLDPRL). The interval 125–414 (KVVVVTGANS…IQERLGSQSG (290 aa)) is interaction with MAPT. An NADP(+)-binding site is contributed by 131-137 (GANSGIG). The interval 209–273 (CNAATFALPW…RFTDINDSLG (65 aa)) is mediates targeting to the mitochondria. Substrate is bound at residue serine 260. Tyrosine 287 is modified (phosphotyrosine; by TNK2). Tyrosine 293 (proton acceptor) is an active-site residue.

This sequence belongs to the short-chain dehydrogenases/reductases (SDR) family. As to quaternary structure, interacts with TP53, p73/TP73 and MAPK8. Interacts with MAPT/TAU, RUNX2 and HYAL2. Forms a ternary complex with TP53 and MDM2. Interacts with ERBB4, LITAF and WBP1. Interacts with DVL1, DVL2 and DVL3. May interact with FAM189B and SCOTIN. Interacts with TNK2. Interacts with TMEM207. Interacts (via WW domain) with VOPP1. Post-translationally, phosphorylated upon genotoxic stress. Phosphorylation of Tyr-33 regulates interaction with TP53, TP73 and MAPK8. May also regulate proapoptotic activity. Phosphorylation by TNK2 is associated with polyubiquitination and degradation. Ubiquitinated when phosphorylated by TNK2, leading to its degradation.

It localises to the cytoplasm. Its subcellular location is the nucleus. The protein localises to the mitochondrion. The protein resides in the golgi apparatus. It is found in the lysosome. Functionally, putative oxidoreductase. Acts as a tumor suppressor and plays a role in apoptosis. May function synergistically with p53/TP53 to control genotoxic stress-induced cell death. Plays a role in TGFB1 signaling and TGFB1-mediated cell death. May also play a role in tumor necrosis factor (TNF)-mediated cell death. Required for normal bone development. Inhibits Wnt signaling, probably by sequestering DVL2 in the cytoplasm. The chain is WW domain-containing oxidoreductase (WWOX) from Pongo abelii (Sumatran orangutan).